The following is a 339-amino-acid chain: Inositol 2-dehydrogenase (339 aa).

It belongs to the Gfo/Idh/MocA family. As to quaternary structure, homotetramer.

It carries out the reaction myo-inositol + NAD(+) = scyllo-inosose + NADH + H(+). Its function is as follows. Involved in the oxidation of myo-inositol (MI) to 2-keto-myo-inositol (2KMI or 2-inosose). The protein is Inositol 2-dehydrogenase of Leifsonia xyli subsp. xyli (strain CTCB07).